We begin with the raw amino-acid sequence, 90 residues long: Cell division topological specificity factor 2 (90 aa).

Belongs to the MinE family.

Its function is as follows. Prevents the cell division inhibition by proteins MinC and MinD at internal division sites while permitting inhibition at polar sites. This ensures cell division at the proper site by restricting the formation of a division septum at the midpoint of the long axis of the cell. The protein is Cell division topological specificity factor 2 of Syntrophomonas wolfei subsp. wolfei (strain DSM 2245B / Goettingen).